Reading from the N-terminus, the 162-residue chain is Caveolin-2 (162 aa).

Residues 1–86 lie on the Cytoplasmic side of the membrane; that stretch reads MGLETEKADV…FEISKYVIYK (86 aa). Y19 bears the Phosphotyrosine; by SRC mark. Phosphoserine occurs at positions 20 and 23. At Y27 the chain carries Phosphotyrosine; by SRC. The helical intramembrane region spans 87-107; sequence FLTVFLAIPLAFVAGILFATL. At 108–162 the chain is on the cytoplasmic side; the sequence is SCLHIWIIMPFVKTCLMLLPSVQTIWKSVTDVVIAPLCTSAGRSFSSVSLQLSHD.

Belongs to the caveolin family. Monomer or homodimer. Interacts with CAV1; the interaction forms a stable heterooligomeric complex that is required for targeting to lipid rafts and for caveolae formation. Tyrosine phosphorylated forms do not form heterooligomers with the Tyr-19-phosphorylated form existing as a monomer or dimer, and the Tyr-27-form as a monomer only. Interacts (tyrosine phosphorylated form) with the SH2 domain-containing proteins, RASA1, NCK1 and SRC. Interacts (tyrosine phosphorylated form) with INSR, the interaction (Tyr-27-phosphorylated form) is increased on insulin stimulation. Interacts (Tyr-19 phosphorylated form) with MAPK1 (phosphorylated form); the interaction, promoted by insulin, leads to nuclear location and MAPK1 activation. Interacts with STAT3; the interaction is increased on insulin-induced tyrosine phosphorylation leading to STAT activation. Phosphorylated on serine and tyrosine residues. CAV1 promotes phosphorylation on Ser-23 which then targets the complex to the plasma membrane, lipid rafts and caveolae. Phosphorylation on both Tyr-19 and Tyr-27 is required for insulin-induced 'Ser-727' phosphorylation of STAT3 and its activation. Phosphorylation on Tyr-19 is required for insulin-induced phosphorylation of MAPK1 and DNA binding of STAT3. Tyrosine phosphorylation is induced by both EGF and insulin.

The protein resides in the nucleus. Its subcellular location is the cytoplasm. The protein localises to the golgi apparatus membrane. It is found in the cell membrane. It localises to the membrane. The protein resides in the caveola. May act as a scaffolding protein within caveolar membranes. Interacts directly with G-protein alpha subunits and can functionally regulate their activity. Acts as an accessory protein in conjunction with CAV1 in targeting to lipid rafts and driving caveolae formation. Positive regulator of cellular mitogenesis of the MAPK signaling pathway. Required for the insulin-stimulated nuclear translocation and activation of MAPK1 and STAT3, and the subsequent regulation of cell cycle progression. In Equus caballus (Horse), this protein is Caveolin-2 (CAV2).